The sequence spans 349 residues: UDP-3-O-acylglucosamine N-acyltransferase (349 aa).

Catalysis depends on His-240, which acts as the Proton acceptor.

This sequence belongs to the transferase hexapeptide repeat family. LpxD subfamily. In terms of assembly, homotrimer.

It carries out the reaction a UDP-3-O-[(3R)-3-hydroxyacyl]-alpha-D-glucosamine + a (3R)-hydroxyacyl-[ACP] = a UDP-2-N,3-O-bis[(3R)-3-hydroxyacyl]-alpha-D-glucosamine + holo-[ACP] + H(+). It functions in the pathway bacterial outer membrane biogenesis; LPS lipid A biosynthesis. Its function is as follows. Catalyzes the N-acylation of UDP-3-O-acylglucosamine using 3-hydroxyacyl-ACP as the acyl donor. Is involved in the biosynthesis of lipid A, a phosphorylated glycolipid that anchors the lipopolysaccharide to the outer membrane of the cell. The protein is UDP-3-O-acylglucosamine N-acyltransferase of Porphyromonas gingivalis (strain ATCC 33277 / DSM 20709 / CIP 103683 / JCM 12257 / NCTC 11834 / 2561).